The chain runs to 144 residues: uncharacterized protein (144 aa).

The segment covering 125–135 has biased composition (polar residues); that stretch reads PQQQNNHQLQS. A disordered region spans residues 125–144; the sequence is PQQQNNHQLQSKPKAASISR.

This is an uncharacterized protein from Rickettsia prowazekii (strain Madrid E).